Here is a 278-residue protein sequence, read N- to C-terminus: Large ribosomal subunit protein uL2 (278 aa).

The tract at residues 202–278 is disordered; sequence ANINDGKAGR…IMRSRHQRKK (77 aa).

Belongs to the universal ribosomal protein uL2 family. As to quaternary structure, part of the 50S ribosomal subunit. Forms a bridge to the 30S subunit in the 70S ribosome.

Functionally, one of the primary rRNA binding proteins. Required for association of the 30S and 50S subunits to form the 70S ribosome, for tRNA binding and peptide bond formation. It has been suggested to have peptidyltransferase activity; this is somewhat controversial. Makes several contacts with the 16S rRNA in the 70S ribosome. This chain is Large ribosomal subunit protein uL2, found in Rhizobium johnstonii (strain DSM 114642 / LMG 32736 / 3841) (Rhizobium leguminosarum bv. viciae).